A 427-amino-acid polypeptide reads, in one-letter code: 3-phosphoshikimate 1-carboxyvinyltransferase (427 aa).

Residues K22, S23, and R27 each coordinate 3-phosphoshikimate. K22 is a binding site for phosphoenolpyruvate. Residues G96 and R124 each contribute to the phosphoenolpyruvate site. 3-phosphoshikimate contacts are provided by S169, S170, Q171, S197, D313, N336, and K340. Position 171 (Q171) interacts with phosphoenolpyruvate. D313 serves as the catalytic Proton acceptor. R344, R386, and K411 together coordinate phosphoenolpyruvate.

The protein belongs to the EPSP synthase family. Monomer.

It localises to the cytoplasm. It carries out the reaction 3-phosphoshikimate + phosphoenolpyruvate = 5-O-(1-carboxyvinyl)-3-phosphoshikimate + phosphate. It functions in the pathway metabolic intermediate biosynthesis; chorismate biosynthesis; chorismate from D-erythrose 4-phosphate and phosphoenolpyruvate: step 6/7. Catalyzes the transfer of the enolpyruvyl moiety of phosphoenolpyruvate (PEP) to the 5-hydroxyl of shikimate-3-phosphate (S3P) to produce enolpyruvyl shikimate-3-phosphate and inorganic phosphate. This chain is 3-phosphoshikimate 1-carboxyvinyltransferase, found in Escherichia coli O8 (strain IAI1).